The primary structure comprises 461 residues: Bacterial E1-like protein BilD (461 aa).

Cysteine 385 acts as the Glycyl thioester intermediate in catalysis.

Its function is as follows. Component of the Bil (bacterial ISG15-like) antiviral defense system, composed of BilA, BilB, BilC and BilD. The Bil system specifically conjugates a ubiquitin-like moiety (bilA) to the bacteriophage central tail fiber (CTF, or tip attachment protein J) via reactions involving E1 (bilD) and E2 (bilB). Modifies CTF of phage SECphi27 and SECphi4, which probably interferes with assembly of the phage tail. Also modifies T5 baseplate hub protein pb3 (gene D16), but not gp27 of phage T6 (Bil defends against T6). BilD (E1) catalyzes the first step in conjugation. Activates ubiquitin-like BilA by first adenylating its C-terminal glycine residue with ATP, and then conjugates it to the side chain of a cysteine residue in E1 (this protein), yielding a ubiquitin-E1 thioester and free AMP. Bil-encoding bacteria produce mostly defective phage SECphi27, many of which have phage assembly defects, including no tails. SECphi27 phage progeny produced in E.coli with the Bil system inject less DNA into naive host cells, maybe because the phage are less able to adsorb and inject their DNA into host cells. In terms of biological role, expression of the Bil system in E.coli (strain MG1655) confers about 100-fold resistance to phage SECphi27, SECphi18, SECphi6, SECphi4 and T5, but not to SECphi17. When cells expressing the Bil system are infected by phage SECphi27 at low multiplicity of infection (0.03 MOI) the culture survives, at 3.0 MOI the culture collapses at the same time as cells without the Bil system. The protein is Bacterial E1-like protein BilD of Collimonas sp. (strain OK412).